The sequence spans 811 residues: N-terminal acetyltransferase B complex subunit arm1 (811 aa).

The protein belongs to the MDM20/NAA25 family. Component of the N-terminal acetyltransferase B (NatB) complex.

Its subcellular location is the cytoplasm. In terms of biological role, non-catalytic subunit of the NatB N-terminal acetyltransferase, which catalyzes acetylation of the amino-terminal methionine residues of all proteins beginning with Met-Asp or Met-Glu and of some proteins beginning with Met-Asn or Met-Met. The sequence is that of N-terminal acetyltransferase B complex subunit arm1 (arm1) from Schizosaccharomyces pombe (strain 972 / ATCC 24843) (Fission yeast).